The chain runs to 343 residues: Putative kinase HI_0665 (343 aa).

Catalysis depends on Asp209, which acts as the Proton acceptor.

The protein belongs to the HipA Ser/Thr kinase family.

This Haemophilus influenzae (strain ATCC 51907 / DSM 11121 / KW20 / Rd) protein is Putative kinase HI_0665.